We begin with the raw amino-acid sequence, 204 residues long: Holliday junction branch migration complex subunit RuvA (204 aa).

The domain I stretch occupies residues 1–64 (MFAFLRGELV…EDLQQLFGFL (64 aa)). The segment at 65-143 (DEEELQLFRL…KIQPTSSAKA (79 aa)) is domain II. The interval 144 to 151 (GAPSAVLS) is flexible linker. A domain III region spans residues 151-204 (SATQLIDDAVAALTTLGFPKASAQKAVSKVLETTPGLSVEELVRTSLAAMHNNL).

It belongs to the RuvA family. Homotetramer. Forms an RuvA(8)-RuvB(12)-Holliday junction (HJ) complex. HJ DNA is sandwiched between 2 RuvA tetramers; dsDNA enters through RuvA and exits via RuvB. An RuvB hexamer assembles on each DNA strand where it exits the tetramer. Each RuvB hexamer is contacted by two RuvA subunits (via domain III) on 2 adjacent RuvB subunits; this complex drives branch migration. In the full resolvosome a probable DNA-RuvA(4)-RuvB(12)-RuvC(2) complex forms which resolves the HJ.

It localises to the cytoplasm. In terms of biological role, the RuvA-RuvB-RuvC complex processes Holliday junction (HJ) DNA during genetic recombination and DNA repair, while the RuvA-RuvB complex plays an important role in the rescue of blocked DNA replication forks via replication fork reversal (RFR). RuvA specifically binds to HJ cruciform DNA, conferring on it an open structure. The RuvB hexamer acts as an ATP-dependent pump, pulling dsDNA into and through the RuvAB complex. HJ branch migration allows RuvC to scan DNA until it finds its consensus sequence, where it cleaves and resolves the cruciform DNA. In Chlorobaculum parvum (strain DSM 263 / NCIMB 8327) (Chlorobium vibrioforme subsp. thiosulfatophilum), this protein is Holliday junction branch migration complex subunit RuvA.